Consider the following 397-residue polypeptide: Elongation factor Tu (397 aa).

The tr-type G domain maps to 10 to 207 (LPHVNVGTIG…TLDSYIPEPV (198 aa)). A G1 region spans residues 19–26 (GHVDHGKT). 19 to 26 (GHVDHGKT) serves as a coordination point for GTP. Threonine 26 is a Mg(2+) binding site. Positions 60-64 (GITIN) are G2. Positions 81–84 (DCPG) are G3. Residues 81 to 85 (DCPGH) and 136 to 139 (NKAD) contribute to the GTP site. The interval 136–139 (NKAD) is G4. Residues 174 to 176 (SAR) are G5.

This sequence belongs to the TRAFAC class translation factor GTPase superfamily. Classic translation factor GTPase family. EF-Tu/EF-1A subfamily. Monomer.

The protein resides in the cytoplasm. The catalysed reaction is GTP + H2O = GDP + phosphate + H(+). GTP hydrolase that promotes the GTP-dependent binding of aminoacyl-tRNA to the A-site of ribosomes during protein biosynthesis. The sequence is that of Elongation factor Tu from Pseudomonas syringae pv. syringae (strain B728a).